Reading from the N-terminus, the 51-residue chain is Ribosome biogenesis protein Nop10 (51 aa).

This sequence belongs to the NOP10 family.

Functionally, involved in ribosome biogenesis; more specifically in 18S rRNA pseudouridylation and in cleavage of pre-rRNA. The protein is Ribosome biogenesis protein Nop10 of Methanococcus maripaludis (strain C5 / ATCC BAA-1333).